The chain runs to 248 residues: Triosephosphate isomerase (248 aa).

Substrate is bound at residue 9–11 (NWK). The Electrophile role is filled by histidine 94. The active-site Proton acceptor is glutamate 164. Substrate contacts are provided by residues glycine 170, serine 209, and 230–231 (GG).

Belongs to the triosephosphate isomerase family. As to quaternary structure, homodimer.

The protein localises to the cytoplasm. It carries out the reaction D-glyceraldehyde 3-phosphate = dihydroxyacetone phosphate. It functions in the pathway carbohydrate biosynthesis; gluconeogenesis. The protein operates within carbohydrate degradation; glycolysis; D-glyceraldehyde 3-phosphate from glycerone phosphate: step 1/1. Involved in the gluconeogenesis. Catalyzes stereospecifically the conversion of dihydroxyacetone phosphate (DHAP) to D-glyceraldehyde-3-phosphate (G3P). The protein is Triosephosphate isomerase of Hahella chejuensis (strain KCTC 2396).